Reading from the N-terminus, the 1628-residue chain is MTSLPEKDQQGEVSVSENQKKLSEEWEPYIDKLVASNRTRDERVESIQELFQKCVIEEKLPVDIFFSIFSLAFERLEEKNTLASYVIDTLWLFDTEWIKNFHEGSHDKAEKRLVSIGKGLKEFLPEEWLLSRLDCKFLENINVVPNGDFLNRKIVRTNTSLLYRQKKFNLLREESEGFSHLMINFFDALTCLRNKSLNEDYLIVQVNKSIISTIGAFDLDPNKVLDLILLLFSENLLDSWRFFLSILRNSPWGPNKERKFWNQLPDREKETFLNNLSNANGIFNFDERFTNTKSIMSQVLGHNLQYMYKEDDENLESYFMMVALLIKYNFISIDNIWAHLSPSDEELGKELGKYKDKLDEQTFKAKGNALTMAAPLPDDEIEDGETMDGQKAEAVPEIKKAKPSQKLGLLKSLLSIGDLSSSLLILGRYPFLLRAYPELSNLYHKLLHISISSIYANYSPLKLLPNDVRERLKQPKFIPEDSRLREITLRPPKEKNLVFSLDPFADRFNKTESEVFYYFENYDEDIPILRNLTEFYNIAIPWLRLSGLALCHDPVIVTKLCRIGQKCVDNSSESRTLWLDIIRSLLLPLITLIDVNTGLSYELFELLSKFDSSTRYALYGEWSSTSMKKFPELKLQNSITEKETKGILRRLTKTNVKQFGRLLAKVCHSNPCTVFSIALNQIETYDNLVEVVVDSARFITALDFDALTFIILSSFSNEFKKRLKSDGTSIAHWLQGLASFCGRVFRRYSSLDCTSIVEYVIKQFKVNQMFDLVILKELLSQMTGLQPWTNLSDNQIQGAAGGPVLRQLSLSLIYENPDVVRKSSMRLFNTLQKNGLATQLLVLLSQKYSTCIYDVTDENSHLKLISSLQDECSDVLYLLMEFLNMVCSPKSYYKLIPSFEQLIQDFHIQPQVAFYLSRYKNLDHSLTGSNTEDAMDIDYENTSSPNTASNPVWSIDNSVITELLPKQIWDYFSPNFYLTFWKLSLYDVFVPLERYEFERSRAFDQIRQTDAANTFYSRHRHDRQKIMQLSNSLQNELKEHINSLESVRKVLQGDCVKWFIPNGVFPNGTRLEHARFNCARYLWTLCIAPRLKMSPHDALYCAKFVKLLHSLGTPNFSTMSFLEILFNSQLPSFIFSMTQREADNFGRFLYEVLYDITSWYRDKILYERECLANGALPGFRLYWSDEQNDPDLSAVLPYNKFVLLFSKWHKYLTSYFESCLLSTEYMHIYNSVIILEKILPCFPLIIESGSALKRAAERLKDEEKREDLKVLALGYFAKLSKKQPEWVSFNSFSGTVRPSNSEKLQRPQQLSVAATSAVDSKTASISEEQAKIDKQKVALNPSAPEFVPDSTPSDAVASETDNKNLVENKAVEKRVEARSSANERKQEERRRKTTPEGNRRALRTRTPTNEDIQRSDSKLREDQSRDRTPQSRSFTNENNDNLRSVSRHTRREPQQAQNLNARREHESQKSDRWRQNGNVNRNPRVSNNNSTNVSRERSSEANHRTSNDNKRDEVTEGKDKNKRQDISGESNSRQNNAISRAGRSNGSNRGNDSRDADGRRSTHYASNKRPRSSDSQSPSNLREEDERENSRRRARQDDRRDRDSRQQRDRPRDRTSRSAREEKRRKIQ.

Composition is skewed to basic and acidic residues over residues 1 to 10 and 1360 to 1399; these read MTSLPEKDQQ and TDNKNLVENKAVEKRVEARSSANERKQEERRRKTTPEGNR. 2 disordered regions span residues 1–21 and 1337–1628; these read MTSLPEKDQQGEVSVSENQKK and VALN…RKIQ. Residues Thr-1406 and Thr-1408 each carry the phosphothreonine modification. The span at 1411–1429 shows a compositional bias: basic and acidic residues; that stretch reads DIQRSDSKLREDQSRDRTP. Residues 1430-1444 are compositionally biased toward polar residues; it reads QSRSFTNENNDNLRS. The span at 1461-1474 shows a compositional bias: basic and acidic residues; the sequence is ARREHESQKSDRWR. The span at 1476 to 1493 shows a compositional bias: low complexity; it reads NGNVNRNPRVSNNNSTNV. The span at 1494 to 1526 shows a compositional bias: basic and acidic residues; it reads SRERSSEANHRTSNDNKRDEVTEGKDKNKRQDI. The span at 1527–1550 shows a compositional bias: polar residues; sequence SGESNSRQNNAISRAGRSNGSNRG. The span at 1551 to 1560 shows a compositional bias: basic and acidic residues; it reads NDSRDADGRR. Ser-1577 is subject to Phosphoserine. The span at 1581 to 1628 shows a compositional bias: basic and acidic residues; that stretch reads LREEDERENSRRRARQDDRRDRDSRQQRDRPRDRTSRSAREEKRRKIQ.

It belongs to the THOC2 family. Component of the THO complex. THO associates with DNA and RNA in vitro.

The protein resides in the nucleus. Component the THO subcomplex of the TREX complex, which operates in coupling transcription elongation to mRNA export. The THO complex is recruited to transcribed genes and moves along the gene with the elongating polymerase during transcription. THO is important for stabilizing nascent RNA in the RNA polymerase II elongation complex by preventing formation of DNA:RNA hybrids behind the elongating polymerase. In Schizosaccharomyces pombe (strain 972 / ATCC 24843) (Fission yeast), this protein is THO complex subunit 2 (tho2).